The primary structure comprises 198 residues: CXXC-type zinc finger protein 4 (198 aa).

The tract at residues 114 to 134 (NHSSSSSSSSGGAGGANPAKK) is disordered. The segment at 132-173 (AKKKRKRCGVCVPCKRLINCGVCSSCRNRKTGHQICKFRKCE) adopts a CXXC-type zinc-finger fold. The Zn(2+) site is built by cysteine 139, cysteine 142, cysteine 145, cysteine 151, cysteine 154, and cysteine 157. Residues 161–166 (KTGHQI) form an interaction with DVL1 region. Cysteine 167 and cysteine 172 together coordinate Zn(2+).

In terms of assembly, interacts with the PDZ domain of DVL1.

It is found in the cytoplasm. Its function is as follows. Acts as a negative regulator of the Wnt signaling pathway via its interaction with DVL1. Binds preferentially to DNA containing cytidine-phosphate-guanosine (CpG) dinucleotides over CpH (H=A, T, and C), hemimethylated-CpG and hemimethylated-hydroxymethyl-CpG. The protein is CXXC-type zinc finger protein 4 (CXXC4) of Homo sapiens (Human).